We begin with the raw amino-acid sequence, 435 residues long: GTPase Der (435 aa).

EngA-type G domains are found at residues 8 to 169 (NLVA…NFEN) and 176 to 351 (FKIA…NNLS). GTP-binding positions include 14 to 21 (GKPNVGKS), 61 to 65 (DTGGI), 123 to 126 (NKLD), 182 to 189 (GKPNAGKS), 229 to 233 (DTAGI), and 294 to 297 (NKWD). Residues 352–435 (REIKQNLLND…PINLVLKKNK (84 aa)) form the KH-like domain.

It belongs to the TRAFAC class TrmE-Era-EngA-EngB-Septin-like GTPase superfamily. EngA (Der) GTPase family. Associates with the 50S ribosomal subunit.

In terms of biological role, GTPase that plays an essential role in the late steps of ribosome biogenesis. This chain is GTPase Der, found in Mycoplasmopsis pulmonis (strain UAB CTIP) (Mycoplasma pulmonis).